The following is a 213-amino-acid chain: Insulin-like peptide INSL6 (213 aa).

An N-terminal signal peptide occupies residues 1-20 (MPRLLRLSLLWLGLLLVRFS). Intrachain disulfides connect cysteine 33–cysteine 179, cysteine 45–cysteine 192, and cysteine 178–cysteine 183. Positions 55-168 (FEEETPFSRL…SNLFWGHHPQ (114 aa)) are cleaved as a propeptide — connecting peptide. Residues 201 to 213 (LKEKRSSLVTKIY) constitute a propeptide that is removed on maturation.

It belongs to the insulin family. As to expression, testis specific.

Its subcellular location is the secreted. Its function is as follows. May have a role in sperm development and fertilization. In Homo sapiens (Human), this protein is Insulin-like peptide INSL6 (INSL6).